We begin with the raw amino-acid sequence, 622 residues long: Chaperone protein DnaK (622 aa).

Thr197 carries the phosphothreonine; by autocatalysis modification. Basic and acidic residues-rich tracts occupy residues 515 to 528 and 575 to 614; these read LHKEEDRKRKEAVE and ASKEEIESKMKTLSEVSHKLAENMYKKDEKPSDDKKKKDD. Disordered stretches follow at residues 515–537 and 575–622; these read LHKEEDRKRKEAVEARNSADSLV and ASKE…AEVE.

Belongs to the heat shock protein 70 family.

Functionally, acts as a chaperone. The sequence is that of Chaperone protein DnaK from Campylobacter lari (strain RM2100 / D67 / ATCC BAA-1060).